We begin with the raw amino-acid sequence, 355 residues long: Elongation factor Ts (355 aa).

Residues Thr-82–Val-85 are involved in Mg(2+) ion dislocation from EF-Tu.

This sequence belongs to the EF-Ts family.

The protein localises to the cytoplasm. In terms of biological role, associates with the EF-Tu.GDP complex and induces the exchange of GDP to GTP. It remains bound to the aminoacyl-tRNA.EF-Tu.GTP complex up to the GTP hydrolysis stage on the ribosome. This is Elongation factor Ts (tsf) from Helicobacter pylori (strain ATCC 700392 / 26695) (Campylobacter pylori).